A 121-amino-acid polypeptide reads, in one-letter code: Small ribosomal subunit protein uS13 (121 aa).

The interval 92–121 (RKGLPCRGQRTRTNARTRKGPRKAAQSLKK) is disordered.

The protein belongs to the universal ribosomal protein uS13 family. In terms of assembly, part of the 30S ribosomal subunit. Forms a loose heterodimer with protein S19. Forms two bridges to the 50S subunit in the 70S ribosome.

Located at the top of the head of the 30S subunit, it contacts several helices of the 16S rRNA. In the 70S ribosome it contacts the 23S rRNA (bridge B1a) and protein L5 of the 50S subunit (bridge B1b), connecting the 2 subunits; these bridges are implicated in subunit movement. Contacts the tRNAs in the A and P-sites. The polypeptide is Small ribosomal subunit protein uS13 (Janthinobacterium sp. (strain Marseille) (Minibacterium massiliensis)).